Reading from the N-terminus, the 351-residue chain is Phosphatidylinositol transfer protein PDR16 (351 aa).

The CRAL-TRIO domain maps to leucine 135–tyrosine 295.

As to quaternary structure, homodimer. Apo-SFH3 forms a dimer through the hydrophobic interaction of gating helices. Binding of phosphatidylinositol leads to dissociation of the dimer into monomers in a reversible manner.

It localises to the lipid droplet. Its subcellular location is the microsome membrane. The protein resides in the endoplasmic reticulum membrane. It carries out the reaction a 1,2-diacyl-sn-glycero-3-phospho-(1D-myo-inositol)(in) = a 1,2-diacyl-sn-glycero-3-phospho-(1D-myo-inositol)(out). Functionally, has phosphatidylinositol transfer activity. Involved in the regulation of the phospholipid composition of plasma- and endomembranes. Altering plasma membrane composition may provide a possible mechanism for multidrug resistance. Involved in the regulation of sterol biosynthesis. Contributes to efficient phospholipase D1 activation in the regulation of phospholipid turnover. Regulates the release of fatty acids from lipid droplets. The polypeptide is Phosphatidylinositol transfer protein PDR16 (PDR16) (Saccharomyces cerevisiae (strain ATCC 204508 / S288c) (Baker's yeast)).